A 320-amino-acid polypeptide reads, in one-letter code: Arabinan endo-1,5-alpha-L-arabinosidase C (320 aa).

A signal peptide spans 1–15 (MKLALSLFLLSGSLA). The active-site Proton acceptor is D31. 2 N-linked (GlcNAc...) asparagine glycosylation sites follow: N126 and N190. The active-site Proton donor is E198.

Belongs to the glycosyl hydrolase 43 family.

The protein localises to the secreted. The catalysed reaction is Endohydrolysis of (1-&gt;5)-alpha-arabinofuranosidic linkages in (1-&gt;5)-arabinans.. Its pathway is glycan metabolism; L-arabinan degradation. In terms of biological role, endo-1,5-alpha-L-arabinanase involved in degradation of pectin. Its preferred substrate is linear 1,5-alpha-L-arabinan. The polypeptide is Arabinan endo-1,5-alpha-L-arabinosidase C (abnC) (Emericella nidulans (strain FGSC A4 / ATCC 38163 / CBS 112.46 / NRRL 194 / M139) (Aspergillus nidulans)).